The sequence spans 1036 residues: Cysteine-rich motor neuron 1 protein (1036 aa).

Positions 1–34 (MYLVAGDRGLAGCGHLLVSLLGLLLLLARSGTRA) are cleaved as a signal peptide. Residues 35–112 (LVCLPCDESK…EYEAGVCEDE (78 aa)) enclose the IGFBP N-terminal domain. Residues 35-939 (LVCLPCDESK…HPSEDSSLDS (905 aa)) are Extracellular-facing. 4 disulfide bridges follow: Cys37–Cys60, Cys40–Cys62, Cys45–Cys63, and Cys51–Cys66. Asn71 carries an N-linked (GlcNAc...) asparagine glycan. 2 disulfide bridges follow: Cys74–Cys90 and Cys84–Cys109. N-linked (GlcNAc...) asparagine glycosylation is present at Asn113. The Cell attachment site signature appears at 314–316 (RGD). Residue Asn330 is glycosylated (N-linked (GlcNAc...) asparagine). 2 VWFC domains span residues 334–391 (PACV…PVCE) and 401–457 (AGCY…PVCE). Antistasin-like domains are found at residues 469-498 (CGELSNCTLTGKDCINGFKRDHNGCRTCQC), 505-532 (CSERKQGCTLNCPFGFLTDAQNCEICEC), 539-564 (CRPIICDKYCPLGLLKNKHGCDICRC), and 567-592 (CPELSCSKICPLGFQQDSHGCLICKC). A glycan (N-linked (GlcNAc...) asparagine) is linked at Asn474. 2 consecutive VWFC domains span residues 606-663 (GTCL…PSCA) and 677-735 (SICH…PQCT). Residue Asn746 is glycosylated (N-linked (GlcNAc...) asparagine). 2 VWFC domains span residues 751–809 (NYCK…PYCI) and 817–874 (VVCH…PMCP). Residues 940–960 (IASVVVPIIICLSIIIAFLFI) traverse the membrane as a helical segment. At 961 to 1036 (NQKKQWIPLL…LQADNFYQTV (76 aa)) the chain is on the cytoplasmic side. Position 1035 is a phosphothreonine (Thr1035).

As to quaternary structure, interacts with BMP4 and BMP7. In terms of processing, N-glycosylated. In terms of tissue distribution, expressed in pancreas, kidney, skeletal muscle, lung, placenta, brain, heart, spleen, liver and small intestine. Expressed in blood vessels (at protein level).

It localises to the secreted. It is found in the cell membrane. Its function is as follows. May play a role in CNS development by interacting with growth factors implicated in motor neuron differentiation and survival. May play a role in capillary formation and maintenance during angiogenesis. Modulates BMP activity by affecting its processing and delivery to the cell surface. The polypeptide is Cysteine-rich motor neuron 1 protein (CRIM1) (Homo sapiens (Human)).